The primary structure comprises 303 residues: Peroxisomal trans-2-enoyl-CoA reductase (303 aa).

23 to 47 is a binding site for NADP(+); sequence VTGGATGIGKAIVKELLELGSNVVI. The residue at position 32 (Lys32) is an N6-succinyllysine. At Ser49 the chain carries Phosphoserine. The active-site Proton acceptor is Tyr179. Tyr179 bears the Phosphotyrosine mark. Residues 301–303 carry the Microbody targeting signal motif; it reads AKL.

Belongs to the short-chain dehydrogenases/reductases (SDR) family. As to quaternary structure, interacts with PEX5, probably required to target it into peroxisomes.

Its subcellular location is the peroxisome. It carries out the reaction a (2E)-enoyl-CoA + NADPH + H(+) = a 2,3-saturated acyl-CoA + NADP(+). The catalysed reaction is (2E)-hexenoyl-CoA + NADPH + H(+) = hexanoyl-CoA + NADP(+). The enzyme catalyses (2E)-octenoyl-CoA + NADPH + H(+) = octanoyl-CoA + NADP(+). It catalyses the reaction (2E)-decenoyl-CoA + NADPH + H(+) = decanoyl-CoA + NADP(+). It carries out the reaction (2E)-dodecenoyl-CoA + NADPH + H(+) = dodecanoyl-CoA + NADP(+). The catalysed reaction is (2E)-tetradecenoyl-CoA + NADPH + H(+) = tetradecanoyl-CoA + NADP(+). It participates in lipid metabolism; fatty acid biosynthesis. In terms of biological role, participates in chain elongation of fatty acids. Catalyzes the reduction of trans-2-enoyl-CoAs of varying chain lengths from 6:1 to 16:1, having maximum activity with 10:1 CoA. Has no 2,4-dienoyl-CoA reductase activity. This chain is Peroxisomal trans-2-enoyl-CoA reductase (PECR), found in Pongo abelii (Sumatran orangutan).